Consider the following 54-residue polypeptide: Large ribosomal subunit protein bL33 (54 aa).

It belongs to the bacterial ribosomal protein bL33 family.

The polypeptide is Large ribosomal subunit protein bL33 (Thermus thermophilus (strain ATCC BAA-163 / DSM 7039 / HB27)).